Here is a 152-residue protein sequence, read N- to C-terminus: MTITDLVLILFIAALLAYALYDQFIMPRRNGPTLLSIALLRRGRVDSVIFVGLVAILIYNNVTSHGAQMTTWLLSALALMGFYIFWIRTPRIIFKQRGFFFANVWIEYNRIKEMNLSEDGVLVMQLEQRRLLIRVRNIDNLEKIYKLLIENQ.

Transmembrane regions (helical) follow at residues 6–26, 45–65, and 67–87; these read LVLILFIAALLAYALYDQFIM, VDSVIFVGLVAILIYNNVTSH, and AQMTTWLLSALALMGFYIFWI.

The protein belongs to the UPF0266 family.

The protein resides in the cell inner membrane. This chain is UPF0266 membrane protein YobD, found in Salmonella enteritidis PT4 (strain P125109).